A 64-amino-acid polypeptide reads, in one-letter code: Temporin-ALg (64 aa).

A signal peptide spans 1–22 (MFTLKKSLLLLFFLGTINLSLC). The propeptide occupies 23–46 (EQERNAEEERRDDLGERQAEVEKR). Leucine amide is present on leucine 62.

It belongs to the frog skin active peptide (FSAP) family. Temporin subfamily. Expressed by the skin glands.

It is found in the secreted. In terms of biological role, antimicrobial peptide with activity against Gram-positive and Gram-negative bacteria and against fungi. Has been tested against S.aureus (MIC=2.5 ug/mL), B.pumilus (MIC=2.5 ug/mL), B.cereus (MIC=30.0 ug/mL), E.coli (MIC=5.0 ug/mL), B.dysenteriae (MIC=10.0 ug/mL), A.cacoaceticus (MIC=30.0 ug/mL), P.aeruginosa (MIC=7.5 ug/mL) and C.albicans (MIC=1.25 ug/mL). Also shows a weak hemolytic activity. The sequence is that of Temporin-ALg from Amolops loloensis (Lolokou Sucker Frog).